Reading from the N-terminus, the 323-residue chain is Probable ATP-dependent 6-phosphofructokinase (323 aa).

Residues Gly11, Arg72 to Phe73, and Gly102 to Ser105 each bind ATP. Position 103 (Asp103) interacts with Mg(2+). Substrate contacts are provided by residues Thr125–Asp127, Arg162, Met169–Arg171, Glu221, and His253–Arg256. Asp127 acts as the Proton acceptor in catalysis.

Belongs to the phosphofructokinase type A (PFKA) family. In terms of assembly, homotetramer. Requires Mg(2+) as cofactor.

It is found in the cytoplasm. The enzyme catalyses beta-D-fructose 6-phosphate + ATP = beta-D-fructose 1,6-bisphosphate + ADP + H(+). It functions in the pathway carbohydrate degradation; glycolysis; D-glyceraldehyde 3-phosphate and glycerone phosphate from D-glucose: step 3/4. Catalyzes the phosphorylation of D-fructose 6-phosphate to fructose 1,6-bisphosphate by ATP, the first committing step of glycolysis. This Mycoplasma genitalium (strain ATCC 33530 / DSM 19775 / NCTC 10195 / G37) (Mycoplasmoides genitalium) protein is Probable ATP-dependent 6-phosphofructokinase (pfkA).